The chain runs to 310 residues: Olfactory receptor 5W2 (310 aa).

Residues 1–25 (MDWENCSSLTDFFLLGITNNPEMKV) lie on the Extracellular side of the membrane. The N-linked (GlcNAc...) asparagine glycan is linked to N5. The chain crosses the membrane as a helical span at residues 26 to 46 (TLFAVFLAVYIINFSANLGMI). At 47–54 (VLIRMDYQ) the chain is on the cytoplasmic side. A helical transmembrane segment spans residues 55 to 75 (LHTPMYFFLSHLSFCDLCYST). The Extracellular segment spans residues 76-99 (ATGPKMLVDLLAKNKSIPFYGCAL). The chain crosses the membrane as a helical span at residues 100 to 120 (QFLVFCIFADSECLLLSVMAF). Residues 121 to 139 (DRYKAIINPLLYTVNMSSR) lie on the Cytoplasmic side of the membrane. Residues 140–160 (VCYLLLTGVYLVGIADALIHM) traverse the membrane as a helical segment. Residues 161-196 (TLAFRLCFCGSNEINHFFCDIPPLLLLSRSDTQVNE) are Extracellular-facing. A helical transmembrane segment spans residues 197 to 217 (LVLFTVFGFIELSTISGVFIS). The Cytoplasmic segment spans residues 218 to 237 (YCYIILSVLEIHSAEGRFKA). A helical transmembrane segment spans residues 238-258 (LSTCTSHLSAVAIFQGTLLFM). At 259-271 (YFRPSSSYSLDQD) the chain is on the extracellular side. The chain crosses the membrane as a helical span at residues 272-292 (KMTSLFYTLVVPMLNPLIYSL). Topologically, residues 293-310 (RNKDVKEALKKLKNKILF) are cytoplasmic.

The protein belongs to the G-protein coupled receptor 1 family.

The protein localises to the cell membrane. Its function is as follows. Odorant receptor. The protein is Olfactory receptor 5W2 (OR5W2) of Homo sapiens (Human).